Consider the following 258-residue polypeptide: Pimeloyl-[acyl-carrier protein] methyl ester esterase (258 aa).

The region spanning 17-241 is the AB hydrolase-1 domain; sequence VYLIHGWGAN…KAAHAPFLSH (225 aa). Substrate is bound by residues Trp-23, 83-84, and 145-149; these read SL and FLQLQ. Ser-83 (nucleophile) is an active-site residue. Catalysis depends on residues Asp-207 and His-235. His-235 contacts substrate.

It belongs to the AB hydrolase superfamily. Carboxylesterase BioH family. As to quaternary structure, monomer.

The protein resides in the cytoplasm. The catalysed reaction is 6-carboxyhexanoyl-[ACP] methyl ester + H2O = 6-carboxyhexanoyl-[ACP] + methanol + H(+). It functions in the pathway cofactor biosynthesis; biotin biosynthesis. In terms of biological role, the physiological role of BioH is to remove the methyl group introduced by BioC when the pimeloyl moiety is complete. It allows to synthesize pimeloyl-ACP via the fatty acid synthetic pathway through the hydrolysis of the ester bonds of pimeloyl-ACP esters. The polypeptide is Pimeloyl-[acyl-carrier protein] methyl ester esterase (Neisseria meningitidis serogroup B (strain ATCC BAA-335 / MC58)).